The chain runs to 245 residues: Carboxymethylenebutenolidase homolog (245 aa).

Alanine 2 carries the post-translational modification N-acetylalanine. Catalysis depends on residues cysteine 132, aspartate 179, and histidine 212. The residue at position 223 (serine 223) is a Phosphoserine.

The protein belongs to the dienelactone hydrolase family.

It is found in the cytoplasm. The protein resides in the cytosol. Its function is as follows. Cysteine hydrolase. This chain is Carboxymethylenebutenolidase homolog (Cmbl), found in Mus musculus (Mouse).